Reading from the N-terminus, the 148-residue chain is Arginine repressor (148 aa).

This sequence belongs to the ArgR family.

The protein resides in the cytoplasm. It participates in amino-acid biosynthesis; L-arginine biosynthesis [regulation]. Its function is as follows. Regulates arginine biosynthesis genes. The polypeptide is Arginine repressor (Chlorobium phaeobacteroides (strain BS1)).